We begin with the raw amino-acid sequence, 227 residues long: 7-cyano-7-deazaguanine synthase (227 aa).

16–26 contributes to the ATP binding site; sequence FSGGQDSTTCL. Zn(2+)-binding residues include Cys194, Cys202, Cys205, and Cys208.

It belongs to the QueC family. Zn(2+) serves as cofactor.

The catalysed reaction is 7-carboxy-7-deazaguanine + NH4(+) + ATP = 7-cyano-7-deazaguanine + ADP + phosphate + H2O + H(+). It functions in the pathway purine metabolism; 7-cyano-7-deazaguanine biosynthesis. In terms of biological role, catalyzes the ATP-dependent conversion of 7-carboxy-7-deazaguanine (CDG) to 7-cyano-7-deazaguanine (preQ(0)). The protein is 7-cyano-7-deazaguanine synthase of Haemophilus influenzae (strain 86-028NP).